The chain runs to 828 residues: Potassium channel SKOR (828 aa).

Topologically, residues 1–86 (MGGSSGGGVS…PDNRWYKAWT (86 aa)) are cytoplasmic. Residues 87-107 (MFILIWALYSSFFTPLEFGFF) form a helical membrane-spanning segment. The Extracellular segment spans residues 108–114 (RGLPENL). Residues 115–135 (FILDIAGQIAFLVDIVLTFFV) form a helical membrane-spanning segment. Residues 136–158 (AYRDSRTYRMIYKRSSIALRYLK) lie on the Cytoplasmic side of the membrane. Residues 159-179 (STFIIDLLACMPWDIIYKAAG) traverse the membrane as a helical segment. Over 180-185 (EKEEVR) the chain is Extracellular. A helical; Voltage-sensor membrane pass occupies residues 186-206 (YLLLIRLYRVHRVILFFHKME). Residues 207–220 (KDIRINYLFTRIVK) are Cytoplasmic-facing. A helical membrane pass occupies residues 221-241 (LIFVELYCTHTAACIFYYLAT). Residues 242–276 (TLPASQEGYTWIGSLKLGDYSYSKFREIDLWTRYT) are Extracellular-facing. The pore-forming intramembrane region spans 277 to 296 (TSMYFAVVTMATVGYGDIHA). The Extracellular segment spans residues 297–300 (VNMR). The chain crosses the membrane as a helical span at residues 301–321 (EMIFAMVYISFDMILGAYLIG). Topologically, residues 322–828 (NMTALIVKGS…GQKLYLAVET (507 aa)) are cytoplasmic. Residue 403-523 (LFRGCSSEFI…RRILNNLLEG (121 aa)) participates in a nucleoside 3',5'-cyclic phosphate binding. ANK repeat units follow at residues 545–576 (EAELALKLNSAAFYGDLYQLKSLIRAGGDPNK), 580–609 (DGRSPLHLAASRGYEDITLYLIQESVDVNI), 613–642 (LGSTPLLEAIKNGNDRVAALLVKEGATLNI), 644–673 (NAGTFLCTVVAKGDSDFLKRLLSNGIDPNS), 677–706 (DHRTPLHVAASEGFYVLAIQLVEASANVLA), and 710–740 (WGNTPLDEALGCGNKMLIKLLEDAKNSQISS). The KHA domain occupies 756-828 (KCTVYFSHPG…GQKLYLAVET (73 aa)).

The protein belongs to the potassium channel family. Plant (TC 1.A.1.4) subfamily. In terms of assembly, the potassium channel is probably composed of a homo- or heterotetrameric complex of pore-forming subunits. Expressed in root pericycle and xylem parenchyma, and in flower at a lower level.

It localises to the membrane. Its function is as follows. Highly selective outward-rectifying potassium channel. Involved in potassium release into the xylem sap toward the shoots. Assuming opened or closed conformations in response to the voltage difference across the membrane, the channel is activated by depolarization. The voltage-dependence of the channel is abolished by internal or external acidification. May interact with the cytoskeleton or with regulatory proteins. The chain is Potassium channel SKOR (SKOR) from Arabidopsis thaliana (Mouse-ear cress).